The chain runs to 101 residues: A-type ATP synthase subunit K (101 aa).

Transmembrane regions (helical) follow at residues 4-24 (ALLI…AAQA), 32-52 (FMGI…GAGV), and 75-95 (VLIF…FAVL).

Belongs to the V-ATPase proteolipid subunit family. Has multiple subunits with at least A(3), B(3), C, D, E, F, H, I and proteolipid K(x).

It is found in the cell membrane. Functionally, component of the A-type ATP synthase that produces ATP from ADP in the presence of a proton gradient across the membrane. This chain is A-type ATP synthase subunit K, found in Sulfolobus acidocaldarius (strain ATCC 33909 / DSM 639 / JCM 8929 / NBRC 15157 / NCIMB 11770).